The sequence spans 427 residues: UDP-N-acetylglucosamine 1-carboxyvinyltransferase (427 aa).

22-23 contributes to the phosphoenolpyruvate binding site; that stretch reads KN. R99 is a binding site for UDP-N-acetyl-alpha-D-glucosamine. C123 acts as the Proton donor in catalysis. Position 123 is a 2-(S-cysteinyl)pyruvic acid O-phosphothioketal (C123). UDP-N-acetyl-alpha-D-glucosamine-binding positions include 128-132, D313, and I335; that span reads RPIDL.

This sequence belongs to the EPSP synthase family. MurA subfamily.

Its subcellular location is the cytoplasm. The catalysed reaction is phosphoenolpyruvate + UDP-N-acetyl-alpha-D-glucosamine = UDP-N-acetyl-3-O-(1-carboxyvinyl)-alpha-D-glucosamine + phosphate. Its pathway is cell wall biogenesis; peptidoglycan biosynthesis. Functionally, cell wall formation. Adds enolpyruvyl to UDP-N-acetylglucosamine. In Sphingopyxis alaskensis (strain DSM 13593 / LMG 18877 / RB2256) (Sphingomonas alaskensis), this protein is UDP-N-acetylglucosamine 1-carboxyvinyltransferase.